An 813-amino-acid chain; its full sequence is LPS-assembly protein LptD (813 aa).

The signal sequence occupies residues 1–22 (MRRALRLLPLPLSIAICLPAMA).

The protein belongs to the LptD family. Component of the lipopolysaccharide transport and assembly complex. Interacts with LptE and LptA.

Its subcellular location is the cell outer membrane. Together with LptE, is involved in the assembly of lipopolysaccharide (LPS) at the surface of the outer membrane. The protein is LPS-assembly protein LptD of Xanthomonas oryzae pv. oryzae (strain KACC10331 / KXO85).